Consider the following 167-residue polypeptide: Phosphopantetheine adenylyltransferase (167 aa).

Position 9 (Thr-9) interacts with substrate. Residues 9–10 (TF) and His-17 contribute to the ATP site. Substrate-binding residues include Lys-41, Leu-73, and Arg-87. ATP contacts are provided by residues 88–90 (GLR), Glu-98, and 123–129 (YQFISGT).

This sequence belongs to the bacterial CoaD family. As to quaternary structure, homohexamer. The cofactor is Mg(2+).

The protein localises to the cytoplasm. It carries out the reaction (R)-4'-phosphopantetheine + ATP + H(+) = 3'-dephospho-CoA + diphosphate. Its pathway is cofactor biosynthesis; coenzyme A biosynthesis; CoA from (R)-pantothenate: step 4/5. Functionally, reversibly transfers an adenylyl group from ATP to 4'-phosphopantetheine, yielding dephospho-CoA (dPCoA) and pyrophosphate. This Bordetella avium (strain 197N) protein is Phosphopantetheine adenylyltransferase.